The sequence spans 658 residues: Deoxynucleoside triphosphate triphosphohydrolase SAMHD1 (658 aa).

A disordered region spans residues 23 to 68; sequence SQPRVSEVAMQSAPLEQPAKRPRCDGSPRTPPSTPPATANLSADDD. At Ser-49 the chain carries Phosphoserine. At Thr-52 the chain carries Phosphothreonine. A Phosphoserine modification is found at Ser-55. Residue Thr-56 is modified to Phosphothreonine. Phosphoserine occurs at positions 64 and 125. Residues 77-142 form the SAM domain; sequence WEPEDVCSFL…IECIQQLSQS (66 aa). Lys-148 and Val-149 together coordinate GTP. Residue Asn-151 coordinates dGTP. GTP contacts are provided by Asp-169, Gln-174, and Arg-177. DGTP-binding residues include Leu-182 and Val-188. An HD domain is found at 196–348; it reads RFEHSLGVGY…GIDVDKWDYF (153 aa). Residues His-199, His-238, and Asp-239 each coordinate Mn(2+). DGTP contacts are provided by Asp-239, His-247, His-265, and Glu-266. The active site involves His-265. Asp-343 provides a ligand contact to Mn(2+). DGTP-binding residues include Tyr-347, Asp-351, Arg-365, Arg-395, Lys-397, Asn-401, Tyr-417, His-419, and Lys-420. The GTP site is built by Arg-494 and Lys-498. Lys-509 is covalently cross-linked (Glycyl lysine isopeptide (Lys-Gly) (interchain with G-Cter in SUMO2)). Position 565 (Lys-565) interacts with GTP. Lys-565 is a binding site for dGTP. At Thr-634 the chain carries Phosphothreonine. Thr-634 bears the (Microbial infection) Phosphothreonine mark.

It belongs to the SAMHD1 family. In terms of assembly, homodimer; in absence of GTP and dNTP. Homotetramer; in GTP- and dNTP-bound form. Interacts with MRE11; leading to stimulate the exonuclease activity of MRE11. Interacts with RBBP8/CtIP. Interacts with RBBP8/CtIP. Interacts (via its C-terminus) with CD81. It depends on Zn(2+) as a cofactor. In terms of processing, phosphorylation at Thr-634 by CDK1 acts as a switch to control deoxynucleoside triphosphate (dNTPase)-dependent and -independent functions. Phosphorylation at Thr-634 takes place in cycling cells: it reduces the stability of the homotetramer, impairing the dNTPase activity and subsequent ability to restrict infection by viruses. It also inhibits ability to suppress LINE-1 retrotransposon activity. In contrast, phosphorylation at Thr-634 promotes DNA end resection at stalled replication forks in response to DNA damage. (Microbial infection) Phosphorylation at Thr-634 by mouse cytomegalovirus kinase M97 leads to a reduced level of dNTP hydrolase activity and the loss of viral restriction. Post-translationally, not phosphorylated by CDK1 at the C-terminus.

The protein resides in the nucleus. The protein localises to the chromosome. It catalyses the reaction a 2'-deoxyribonucleoside 5'-triphosphate + H2O = a 2'-deoxyribonucleoside + triphosphate + H(+). The catalysed reaction is dATP + H2O = 2'-deoxyadenosine + triphosphate + H(+). The enzyme catalyses dCTP + H2O = 2'-deoxycytidine + triphosphate + H(+). It carries out the reaction dGTP + H2O = 2'-deoxyguanosine + triphosphate + H(+). It catalyses the reaction dTTP + H2O = thymidine + triphosphate + H(+). With respect to regulation, allosterically activated and regulated via the combined actions of GTP and dNTPs (dATP, dGTP, dTTP and dCTP): Allosteric site 1 binds GTP, while allosteric site 2 binds dNTP. Allosteric activation promotes the formation of highly active homotetramers. Isoform 1: Phosphorylation at Thr-634 impairs homotetramerization, thereby inhibiting dNTPase activity, leading to reduced ability to restrict infection by viruses. Functionally, protein that acts both as a host restriction factor involved in defense response to virus and as a regulator of DNA end resection at stalled replication forks. Has deoxynucleoside triphosphate (dNTPase) activity, which is required to restrict infection by viruses: dNTPase activity reduces cellular dNTP levels to levels too low for retroviral reverse transcription to occur, blocking early-stage virus replication in dendritic and other myeloid cells. Likewise, suppresses LINE-1 retrotransposon activity. In addition to virus restriction, dNTPase activity acts as a regulator of DNA precursor pools by regulating dNTP pools. Phosphorylation at Thr-634 acts as a switch to control dNTPase-dependent and -independent functions: it inhibits dNTPase activity and ability to restrict infection by viruses, while it promotes DNA end resection at stalled replication forks. Functions during S phase at stalled DNA replication forks to promote the resection of gapped or reversed forks: acts by stimulating the exonuclease activity of MRE11, activating the ATR-CHK1 pathway and allowing the forks to restart replication. Its ability to promote degradation of nascent DNA at stalled replication forks is required to prevent induction of type I interferons, thereby preventing chronic inflammation. Ability to promote DNA end resection at stalled replication forks is independent of dNTPase activity. Enhances immunoglobulin hypermutation in B-lymphocytes by promoting transversion mutation. The polypeptide is Deoxynucleoside triphosphate triphosphohydrolase SAMHD1 (Mus musculus (Mouse)).